The following is a 470-amino-acid chain: 6-phospho-beta-galactosidase (470 aa).

Positions 19, 116, 159, 160, and 297 each coordinate D-galactose 6-phosphate. The active-site Proton donor is the Glu160. The active-site Nucleophile is Glu375. The D-galactose 6-phosphate site is built by Ser430, Trp431, Lys437, and Tyr439.

Belongs to the glycosyl hydrolase 1 family.

The catalysed reaction is a 6-phospho-beta-D-galactoside + H2O = D-galactose 6-phosphate + an alcohol. It functions in the pathway carbohydrate metabolism; lactose degradation; D-galactose 6-phosphate and beta-D-glucose from lactose 6-phosphate: step 1/1. The sequence is that of 6-phospho-beta-galactosidase from Staphylococcus epidermidis (strain ATCC 35984 / DSM 28319 / BCRC 17069 / CCUG 31568 / BM 3577 / RP62A).